The chain runs to 176 residues: Small ribosomal subunit protein uS8c (176 aa).

Belongs to the universal ribosomal protein uS8 family. In terms of assembly, part of the 30S ribosomal subunit.

Its subcellular location is the plastid. The protein localises to the chloroplast. In terms of biological role, one of the primary rRNA binding proteins, it binds directly to 16S rRNA central domain where it helps coordinate assembly of the platform of the 30S subunit. This Stigeoclonium helveticum (Green alga) protein is Small ribosomal subunit protein uS8c (rps8).